The following is a 278-amino-acid chain: MPRLSLLLPLLLLLLLPLLPPLSPSLGIRDVGGRRPKCGPCRPEGCPAPAPCPAPGISALDECGCCARCLGAEGASCGGRAGGRCGPGLVCASQAAGAAPEGTGLCVCAQRGTVCGSDGRSYPSVCALRLRARHTPRAHPGHLHKARDGPCEFAPVVVVPPRSVHNVTGAQVGLSCEVRAVPTPVITWRKVTKSPEGTQALEELPGDHVNIAVQVRGGPSDHEATAWILINPLRKEDEGVYQCHAANMVGEAESHSTVTVLDLSKYRSFHFPAPDDRM.

The N-terminal stretch at 1 to 25 is a signal peptide; that stretch reads MPRLSLLLPLLLLLLLPLLPPLSPS. In terms of domain architecture, IGFBP N-terminal spans 34–109; that stretch reads RRPKCGPCRP…PEGTGLCVCA (76 aa). Cystine bridges form between Cys-38-Cys-63, Cys-41-Cys-65, Cys-46-Cys-66, Cys-52-Cys-69, Cys-77-Cys-91, Cys-85-Cys-106, and Cys-115-Cys-151. The region spanning 95–153 is the Kazal-like domain; that stretch reads AAGAAPEGTGLCVCAQRGTVCGSDGRSYPSVCALRLRARHTPRAHPGHLHKARDGPCEF. One can recognise an Ig-like C2-type domain in the interval 155 to 259; the sequence is PVVVVPPRSV…GEAESHSTVT (105 aa). The N-linked (GlcNAc...) asparagine glycan is linked to Asn-166. Cys-176 and Cys-243 are joined by a disulfide.

In terms of tissue distribution, expressed at the highest level in both brain and testis, with lower levels in the prostate, bladder and lung.

The protein localises to the secreted. Functionally, IGF-binding proteins prolong the half-life of IGFs and have been shown to either inhibit or stimulate the growth promoting effects of the IGFs in cell culture. They alter the interaction of IGFs with their cell surface receptors. May be a putative tumor suppressor protein. The sequence is that of Insulin-like growth factor-binding protein-like 1 (IGFBPL1) from Homo sapiens (Human).